The chain runs to 236 residues: Phosphoribosylaminoimidazole-succinocarboxamide synthase (236 aa).

The protein belongs to the SAICAR synthetase family.

The catalysed reaction is 5-amino-1-(5-phospho-D-ribosyl)imidazole-4-carboxylate + L-aspartate + ATP = (2S)-2-[5-amino-1-(5-phospho-beta-D-ribosyl)imidazole-4-carboxamido]succinate + ADP + phosphate + 2 H(+). It participates in purine metabolism; IMP biosynthesis via de novo pathway; 5-amino-1-(5-phospho-D-ribosyl)imidazole-4-carboxamide from 5-amino-1-(5-phospho-D-ribosyl)imidazole-4-carboxylate: step 1/2. The polypeptide is Phosphoribosylaminoimidazole-succinocarboxamide synthase (purC) (Lactococcus lactis subsp. lactis (strain IL1403) (Streptococcus lactis)).